Here is a 313-residue protein sequence, read N- to C-terminus: Probable cell division protein WhiA (313 aa).

Residues 278–311 (SLKELGKLLDPPLSKSGVNHRLRRIKSIANEIRG) constitute a DNA-binding region (H-T-H motif).

It belongs to the WhiA family.

Functionally, involved in cell division and chromosome segregation. This is Probable cell division protein WhiA from Halothermothrix orenii (strain H 168 / OCM 544 / DSM 9562).